A 160-amino-acid polypeptide reads, in one-letter code: Probable prefoldin subunit 5 (160 aa).

The protein belongs to the prefoldin subunit alpha family. Heterohexamer of two PFD-alpha type and four PFD-beta type subunits.

In terms of biological role, binds specifically to cytosolic chaperonin (c-CPN) and transfers target proteins to it. Binds to nascent polypeptide chain and promotes folding in an environment in which there are many competing pathways for nonnative proteins. This Dictyostelium discoideum (Social amoeba) protein is Probable prefoldin subunit 5 (pfdn5).